The following is a 348-amino-acid chain: Galanin receptor type 1 (348 aa).

At 1 to 34 (MELAMVNLSEGNGSDPEPPAPESRPLFGIGVENF) the chain is on the extracellular side. N-linked (GlcNAc...) asparagine glycosylation is found at asparagine 7 and asparagine 12. The chain crosses the membrane as a helical span at residues 35–55 (ITLVVFGLIFAMGVLGNSLVI). The Cytoplasmic portion of the chain corresponds to 56–70 (TVLARSKPGKPRSTT). A helical membrane pass occupies residues 71–91 (NLFILNLSIADLAYLLFCIPF). The Extracellular segment spans residues 92-109 (QATVYALPTWVLGAFICK). A disulfide bridge links cysteine 108 with cysteine 186. Residues 110 to 131 (FIHYFFTVSMLVSIFTLAAMSV) form a helical membrane-spanning segment. Residues 132–151 (DRYVAIVHSRRSSSLRVSRN) are Cytoplasmic-facing. A helical transmembrane segment spans residues 152–172 (ALLGVGFIWALSIAMASPVAY). At 173–197 (HQRLFHRDSNQTFCWEQWPNKLHKK) the chain is on the extracellular side. Asparagine 182 carries an N-linked (GlcNAc...) asparagine glycan. A helical membrane pass occupies residues 198-218 (AYVVCTFVFGYLLPLLLICFC). Topologically, residues 219–247 (YAKVLNHLHKKLKNMSKKSEASKKKTAQT) are cytoplasmic. Residues 248 to 268 (VLVVVVVFGISWLPHHVVHLW) traverse the membrane as a helical segment. The Extracellular segment spans residues 269–270 (AE). A helical transmembrane segment spans residues 271–291 (FGAFPLTPASFFFRITAHCLA). At 292–348 (YSNSSVNPIIYAFLSENFRKAYKQVFKCHVCDESPRSETKENKSRMDTPPSTNCTHV) the chain is on the cytoplasmic side. Residue cysteine 319 is the site of S-palmitoyl cysteine attachment. Residues 328–337 (SETKENKSRM) show a composition bias toward basic and acidic residues. The interval 328-348 (SETKENKSRMDTPPSTNCTHV) is disordered.

The protein belongs to the G-protein coupled receptor 1 family. In terms of assembly, interacts with GRP39 AND HTR1A. Post-translationally, three cysteine residues are found in the C-terminus, at least one of which may be palmitoylated. As to expression, expression is detected in brain, spinal cord, heart and skeletal muscle.

The protein resides in the cell membrane. In terms of biological role, receptor for the hormone galanin. The activity of this receptor is mediated by G proteins that inhibit adenylate cyclase activity. This is Galanin receptor type 1 (Galr1) from Mus musculus (Mouse).